Here is a 1316-residue protein sequence, read N- to C-terminus: Serine/threonine-protein kinase 36 (1316 aa).

The Protein kinase domain occupies 4–254 (YHVLEMIGEG…WPDLLHHPFI (251 aa)). Residues 10–18 (IGEGSFGRV) and lysine 33 each bind ATP. Residue aspartate 125 is the Proton acceptor of the active site. A disordered region spans residues 389–418 (QGFPEPRPEAMGRQSTDVVDPENEEPDSDD). A compositionally biased stretch (acidic residues) spans 407 to 418 (VDPENEEPDSDD).

Belongs to the protein kinase superfamily. Ser/Thr protein kinase family. In terms of assembly, interacts with SPAG16 and KIF27. Requires Mg(2+) as cofactor. Weakly expressed in the heart and thymus, present at moderate to high levels in the lungs, pancreas, and kidneys and at higher levels in the brain and cerebellum. Very highly expressed in the testis.

The protein resides in the cytoplasm. Its subcellular location is the nucleus. It localises to the cytoskeleton. The protein localises to the cilium axoneme. The catalysed reaction is L-seryl-[protein] + ATP = O-phospho-L-seryl-[protein] + ADP + H(+). The enzyme catalyses L-threonyl-[protein] + ATP = O-phospho-L-threonyl-[protein] + ADP + H(+). Serine/threonine protein kinase which plays an important role in the sonic hedgehog (Shh) pathway by regulating the activity of GLI transcription factors. Controls the activity of the transcriptional regulators GLI1, GLI2 and GLI3 by opposing the effect of SUFU and promoting their nuclear localization. GLI2 requires an additional function of STK36 to become transcriptionally active, but the enzyme does not need to possess an active kinase catalytic site for this to occur. Required for postnatal development, possibly by regulating the homeostasis of cerebral spinal fluid or ciliary function. Essential for construction of the central pair apparatus of motile cilia. This is Serine/threonine-protein kinase 36 from Mus musculus (Mouse).